A 173-amino-acid chain; its full sequence is Monothiol glutaredoxin-S14, chloroplastic (173 aa).

The N-terminal 63 residues, 1-63 (MALRSVKTPT…KLKPTKFRCS (63 aa)), are a transit peptide targeting the chloroplast. Positions 72–173 (KDTLEKLVNS…QEEVEKAMCS (102 aa)) constitute a Glutaredoxin domain. Position 89 (K89) interacts with glutathione. [2Fe-2S] cluster is bound by residues C97 and F99. Residue C97 is modified to S-glutathionyl cysteine. The tract at residues 97-100 (CGFS) is required for CAX1 activation. Residues R126 and K130 each contribute to the glutathione site. Residues 133-137 (SNWPT) are required for CAX1 activation. Glutathione is bound by residues F138 and 151 to 152 (CD).

Belongs to the glutaredoxin family. CGFS subfamily. As to quaternary structure, [2Fe-2S]-bridged holo-homodimer. Interacts with N-terminal part of CAX1 in yeast. Interacts in vitro with SUFE1, BOLA1, BOLA2 and BOLA4. Interacts in vivo only with SUFE1, BOLA1 and BOLA4. Interacts with SBP1. As to expression, highly expressed in leaves, at intermediate levels in stems and at lower levels in roots and flowers.

The protein resides in the plastid. The protein localises to the chloroplast. Its function is as follows. May only reduce GSH-thiol disulfides, but not protein disulfides (Potential). Probably involved in the regulation of the redox state of the BOLA proteins (Potential). May act as Fe-S cluster donors to Fe-S cluster-requiring proteins. May protect cells against protein oxidative damage. May regulate CAX cation transporters. The GRXS14-BOLA1 heterodimer binds a labile, oxygen sensitive Fe-S cluster. The protein is Monothiol glutaredoxin-S14, chloroplastic of Arabidopsis thaliana (Mouse-ear cress).